A 301-amino-acid chain; its full sequence is Nucleosome assembly protein 1;3 (301 aa).

The stretch at 15 to 69 (VETLKNKLQALAEQHVDVLESLAPVVRKRVDVLIEIQSQHDELEAKFLEEKAALE) forms a coiled coil. The Nuclear export signal signature appears at 36-51 (LAPVVRKRVDVLIEIQ). The interval 278 to 301 (DEDYGASWVDDEEDDDDEYSDEEA) is disordered.

This sequence belongs to the nucleosome assembly protein (NAP) family.

The protein localises to the nucleus. It is found in the cytoplasm. Its function is as follows. May modulate chromatin structure by regulation of nucleosome assembly/disassembly. The sequence is that of Nucleosome assembly protein 1;3 (NAP1;3) from Oryza sativa subsp. japonica (Rice).